A 189-amino-acid polypeptide reads, in one-letter code: Glycerol-3-phosphate acyltransferase (189 aa).

The next 5 helical transmembrane spans lie at 1–21 (MFWS…AIVL), 50–70 (KLAI…VLLA), 81–101 (AWVG…RFQG), 111–131 (MLMA…VLTF), and 151–171 (LLAW…LMIV).

This sequence belongs to the PlsY family. Probably interacts with PlsX.

Its subcellular location is the cell inner membrane. The catalysed reaction is an acyl phosphate + sn-glycerol 3-phosphate = a 1-acyl-sn-glycero-3-phosphate + phosphate. It participates in lipid metabolism; phospholipid metabolism. Functionally, catalyzes the transfer of an acyl group from acyl-phosphate (acyl-PO(4)) to glycerol-3-phosphate (G3P) to form lysophosphatidic acid (LPA). This enzyme utilizes acyl-phosphate as fatty acyl donor, but not acyl-CoA or acyl-ACP. In Pseudomonas entomophila (strain L48), this protein is Glycerol-3-phosphate acyltransferase.